Reading from the N-terminus, the 1496-residue chain is Synaptojanin-2 (1496 aa).

Residues 120-444 enclose the SAC domain; the sequence is LKKILSSGVF…GHSLSKVFTG (325 aa). Residues 889–968 enclose the RRM domain; it reads DATVVVNLQS…RAVKIRPKTK (80 aa). Disordered stretches follow at residues 1027–1073, 1085–1166, 1190–1405, and 1427–1473; these read NQPG…DDAD, GEFR…YNVK, ASEE…PEAA, and NTWL…KTLG. The segment covering 1101–1115 has biased composition (pro residues); that stretch reads RPRPPQPPQRPPPPT. A phosphoserine mark is found at serine 1124 and serine 1191. A compositionally biased stretch (polar residues) spans 1124–1140; it reads SDASISSGTHGQYSILQ. Composition is skewed to pro residues over residues 1221–1235 and 1319–1332; these read PQAPPLLPRRPPPRV and VPPPLEAPPLVPKV. A compositionally biased stretch (low complexity) spans 1340–1359; that stretch reads APAAFHLQVLQSNSQLLQGL. 2 stretches are compositionally biased toward polar residues: residues 1383 to 1394 and 1427 to 1442; these read FLSTSSATSPDS and NTWLSKSSDPLDSGTR.

It belongs to the synaptojanin family. In the central section; belongs to the inositol 1,4,5-trisphosphate 5-phosphatase family. In terms of assembly, binds to GRB2. Isoform 2A binds to SYNJ2BP/OMP25. Isoform 2B2 C-terminal proline-rich region binds to a variety of SH3 domain-containing proteins including SH3GL1, SH3GL2, SH3GL3 and GRB2.

The protein resides in the cytoplasm. The protein localises to the cell membrane. Its subcellular location is the membrane raft. It is found in the presynapse. It localises to the cytoskeleton. It catalyses the reaction a 1,2-diacyl-sn-glycero-3-phospho-(1D-myo-inositol-4,5-bisphosphate) + H2O = a 1,2-diacyl-sn-glycero-3-phospho-(1D-myo-inositol 4-phosphate) + phosphate. Its function is as follows. Inositol 5-phosphatase which may be involved in distinct membrane trafficking and signal transduction pathways. May mediate the inhibitory effect of Rac1 on endocytosis. This Homo sapiens (Human) protein is Synaptojanin-2 (SYNJ2).